Consider the following 695-residue polypeptide: Protein ACTIVITY OF BC1 COMPLEX KINASE 7, chloroplastic (695 aa).

The Protein kinase domain occupies 259–589 (EFEEQPIAAA…VQEIRKQADD (331 aa)). ATP-binding positions include 265–273 (IAAASLGQV) and K287. Catalysis depends on D421, which acts as the Proton acceptor. 2 helical membrane passes run 633–653 (TILQ…NIGV) and 659–679 (GSQL…LLVL).

The protein belongs to the protein kinase superfamily. ADCK protein kinase family. Mostly expressed in leaves and flowers, and, to a lower extent, in roots.

The protein resides in the plastid. It is found in the chloroplast thylakoid membrane. The protein localises to the chloroplast. It localises to the plastoglobule. It carries out the reaction L-seryl-[protein] + ATP = O-phospho-L-seryl-[protein] + ADP + H(+). The enzyme catalyses L-threonyl-[protein] + ATP = O-phospho-L-threonyl-[protein] + ADP + H(+). Involved in resistance to oxidative stress. Influences responses to reactive oxygen species (ROS) production. Regulates plastoglobules formation in thylakoids. Together with OSA1, regulates iron distribution within the chloroplast and mediates the oxidative stress response. Together with ABC1K8, influences chloroplast lipid synthesis/accumulation and modulates chloroplast membrane composition in response to stress. This Arabidopsis thaliana (Mouse-ear cress) protein is Protein ACTIVITY OF BC1 COMPLEX KINASE 7, chloroplastic.